We begin with the raw amino-acid sequence, 187 residues long: dCTP deaminase, dUMP-forming (187 aa).

Residues Lys-101–Arg-106, Asp-119, Thr-127–Glu-129, Gln-148, Tyr-162, Lys-170, and Gln-174 contribute to the dCTP site. Residue Glu-129 is the Proton donor/acceptor of the active site.

Belongs to the dCTP deaminase family. As to quaternary structure, homotrimer.

It carries out the reaction dCTP + 2 H2O = dUMP + NH4(+) + diphosphate. It functions in the pathway pyrimidine metabolism; dUMP biosynthesis; dUMP from dCTP: step 1/1. Bifunctional enzyme that catalyzes both the deamination of dCTP to dUTP and the hydrolysis of dUTP to dUMP without releasing the toxic dUTP intermediate. This chain is dCTP deaminase, dUMP-forming, found in Corynebacterium diphtheriae (strain ATCC 700971 / NCTC 13129 / Biotype gravis).